The primary structure comprises 184 residues: Transmembrane protein 220 (184 aa).

Transmembrane regions (helical) follow at residues 30–50 (LWRI…YVQI), 54–74 (DAEM…FVSI), 82–102 (VIWK…AIYL), 121–137 (RELS…LLCR), and 149–169 (LIIA…IYID).

It is found in the membrane. This Xenopus laevis (African clawed frog) protein is Transmembrane protein 220 (tmem220).